We begin with the raw amino-acid sequence, 123 residues long: UPF0102 protein PputW619_0932 (123 aa).

It belongs to the UPF0102 family.

The polypeptide is UPF0102 protein PputW619_0932 (Pseudomonas putida (strain W619)).